A 167-amino-acid chain; its full sequence is Probable glutathione peroxidase 8 (167 aa).

Residue cysteine 41 is part of the active site.

The protein belongs to the glutathione peroxidase family.

It carries out the reaction 2 glutathione + H2O2 = glutathione disulfide + 2 H2O. Functionally, may constitute a glutathione peroxidase-like protective system against oxidative stresses. In Arabidopsis thaliana (Mouse-ear cress), this protein is Probable glutathione peroxidase 8 (GPX8).